A 536-amino-acid chain; its full sequence is Zinc finger CCCH domain-containing protein 18 (536 aa).

The segment at 156 to 183 (EFPVKICHYFNKGFCKHGNNCRYFHGQI) adopts a C3H1-type zinc-finger fold. In terms of domain architecture, HTH OST-type spans 211–294 (SLEKLEGEII…HGQHSVILAE (84 aa)). The 76-residue stretch at 317–392 (RQIYLTFPAE…ARVLVKPYRE (76 aa)) folds into the RRM domain.

Possesses ribonuclease activity in vitro. In Arabidopsis thaliana (Mouse-ear cress), this protein is Zinc finger CCCH domain-containing protein 18.